The primary structure comprises 211 residues: Abscisic acid receptor PYL7 (211 aa).

The interval 29–180 (HHCRENQCTS…NLKSLACVSE (152 aa)) is START-like. Cystine bridges form between C31-C161 and C36-C161. Residues K65, 93-98 (ATTSTE), 120-126 (RLKNYSS), and E145 contribute to the abscisate site. A Gate loop motif is present at residues 89 to 93 (SGLPA). A Latch loop motif is present at residues 119-121 (HRL).

Belongs to the PYR/PYL/RCAR abscisic acid intracellular receptor family. In terms of assembly, homodimer. Binds ABA on one subunit only. Binds to CARs protein in an ABA-independent manner, both at the plasma membrane and in the nucleus. Interacts with ABI1, and possibly with other PP2Cs.

The protein resides in the cytoplasm. Its subcellular location is the nucleus. It localises to the cell membrane. Its function is as follows. Receptor for abscisic acid (ABA) required for ABA-mediated responses such as stomatal closure and germination inhibition. Inhibits the activity of group-A protein phosphatases type 2C (PP2Cs) when activated by ABA. The polypeptide is Abscisic acid receptor PYL7 (PYL7) (Arabidopsis thaliana (Mouse-ear cress)).